The following is a 152-amino-acid chain: Large-conductance mechanosensitive channel (152 aa).

The next 2 membrane-spanning stretches (helical) occupy residues 14-34 (VIDL…VTSL) and 81-101 (GLFL…FIAI).

It belongs to the MscL family. Homopentamer.

Its subcellular location is the cell membrane. Functionally, channel that opens in response to stretch forces in the membrane lipid bilayer. May participate in the regulation of osmotic pressure changes within the cell. This is Large-conductance mechanosensitive channel from Clostridium perfringens (strain 13 / Type A).